A 265-amino-acid chain; its full sequence is 14-3-3-like protein GF14 nu (265 aa).

Residues S67, S109, and S190 each carry the phosphoserine modification. T211 carries the post-translational modification Phosphothreonine. The disordered stretch occupies residues 242–265; the sequence is AGGDEIKEASKHEPEEGKPAETGQ. Over residues 245 to 265 the composition is skewed to basic and acidic residues; it reads DEIKEASKHEPEEGKPAETGQ.

This sequence belongs to the 14-3-3 family. In terms of assembly, component of the SERK1 signaling complex, composed of KAPP, CDC48A, GRF6 or GRF7, SERK1, SERK2, SERK3/BAK1 and BRI1. Interacts with DREB1A and DREB1B in the nucleus. Interacts with CINV1.

The protein localises to the nucleus. The protein resides in the cytoplasm. In terms of biological role, is associated with a DNA binding complex that binds to the G box, a well-characterized cis-acting DNA regulatory element found in plant genes. This is 14-3-3-like protein GF14 nu (GRF7) from Arabidopsis thaliana (Mouse-ear cress).